The primary structure comprises 56 residues: Protein translocase subunit SecE (56 aa).

Residues 30-50 (VFWLVLFVSIFLGIVDYLMFL) traverse the membrane as a helical segment.

Belongs to the SecE/SEC61-gamma family. As to quaternary structure, component of the Sec protein translocase complex. Heterotrimer consisting of SecY, SecE and SecG subunits. The heterotrimers can form oligomers, although 1 heterotrimer is thought to be able to translocate proteins. Interacts with the ribosome. Interacts with SecDF, and other proteins may be involved. Interacts with SecA.

It is found in the cell inner membrane. Functionally, essential subunit of the Sec protein translocation channel SecYEG. Clamps together the 2 halves of SecY. May contact the channel plug during translocation. The chain is Protein translocase subunit SecE from Borreliella burgdorferi (strain ATCC 35210 / DSM 4680 / CIP 102532 / B31) (Borrelia burgdorferi).